We begin with the raw amino-acid sequence, 488 residues long: GTPase Der (488 aa).

2 EngA-type G domains span residues Pro-3–Met-166 and Ile-199–Thr-372. GTP is bound by residues Gly-9–Ser-16, Asp-56–Ile-60, Asn-118–Asp-121, Gly-205–Ser-212, Asp-252–Val-256, and Asn-317–Asp-320. One can recognise a KH-like domain in the interval Arg-373–Asp-457.

The protein belongs to the TRAFAC class TrmE-Era-EngA-EngB-Septin-like GTPase superfamily. EngA (Der) GTPase family. As to quaternary structure, associates with the 50S ribosomal subunit.

Its function is as follows. GTPase that plays an essential role in the late steps of ribosome biogenesis. The protein is GTPase Der of Shewanella sp. (strain ANA-3).